Here is a 428-residue protein sequence, read N- to C-terminus: Somatostatin receptor type 3 (428 aa).

Topologically, residues Met-1–Gly-45 are extracellular. N-linked (GlcNAc...) asparagine glycosylation is found at Asn-18 and Asn-31. The chain crosses the membrane as a helical span at residues Ile-46–Leu-71. The Cytoplasmic segment spans residues Arg-72–Ser-81. The chain crosses the membrane as a helical span at residues Val-82–Ala-103. Topologically, residues Gln-104–Arg-118 are extracellular. Cysteines 117 and 192 form a disulfide. Residues Leu-119–Val-140 traverse the membrane as a helical segment. Over Asp-141–Arg-162 the chain is Cytoplasmic. Residues Met-163–Phe-182 traverse the membrane as a helical segment. Residues Ser-183–Ala-206 are Extracellular-facing. The chain crosses the membrane as a helical span at residues Phe-207–Val-232. The Cytoplasmic portion of the chain corresponds to Lys-233–Arg-266. The helical transmembrane segment at Met-267 to Val-288 threads the bilayer. Topologically, residues Asn-289–Gly-302 are extracellular. The chain crosses the membrane as a helical span at residues Leu-303–Leu-325. At Ser-326–Leu-428 the chain is on the cytoplasmic side. Phosphoserine is present on residues Ser-341, Ser-346, and Ser-351. The interval Arg-343–Leu-428 is disordered. At Thr-357 the chain carries Phosphothreonine. Over residues Thr-357–Glu-370 the composition is skewed to acidic residues. Polar residues predominate over residues Arg-385 to Leu-412.

Belongs to the G-protein coupled receptor 1 family. In terms of assembly, homodimer and heterodimer with SSTR2. Heterodimerization with SSTR2 inactivates SSTR3 receptor function. Phosphorylated. Phosphorylation increases upon somatostatin binding. In terms of tissue distribution, densely expressed in cerebellum and at moderate levels in the amygdala, cortex, striatum, spleen, liver and pituitary.

Its subcellular location is the cell membrane. Functionally, receptor for somatostatin-14 and -28. This receptor is coupled via pertussis toxin sensitive G proteins to inhibition of adenylyl cyclase. This is Somatostatin receptor type 3 (Sstr3) from Rattus norvegicus (Rat).